The chain runs to 266 residues: Apolipoprotein A-I (266 aa).

Residues 1–18 form the signal peptide; the sequence is MKAVVLTLAVLFLTGSQA. Repeat copies occupy residues 67 to 88 and 89 to 110. Residues 67–266 form a 10 X approximate tandem repeats region; sequence LKLLDNWDTL…DEATKKLNAQ (200 aa). The residue at position 109 (Met109) is a Methionine sulfoxide. The stretch at 111–121 is one 3; half-length repeat; that stretch reads KDLEEVKKKVQ. 5 tandem repeats follow at residues 122 to 143, 144 to 165, 166 to 187, 188 to 209, and 210 to 231. One copy of the 9; half-length repeat lies at 232 to 242; the sequence is PALEDLRQGLL. Repeat unit 10 spans residues 243–266; it reads PVLESFRTSLLAAVDEATKKLNAQ.

The protein belongs to the apolipoprotein A1/A4/E family. In terms of assembly, homodimer. Interacts with APOA1BP and CLU. Component of a sperm activating protein complex (SPAP), consisting of APOA1, an immunoglobulin heavy chain, an immunoglobulin light chain and albumin. Interacts with NDRG1. Interacts with SCGB3A2. Interacts with NAXE and YJEFN3. Post-translationally, glycosylated. In terms of processing, palmitoylated. Phosphorylation sites are present in the extracellular medium.

It is found in the secreted. Functionally, participates in the reverse transport of cholesterol from tissues to the liver for excretion by promoting cholesterol efflux from tissues and by acting as a cofactor for the lecithin cholesterol acyltransferase (LCAT). As part of the SPAP complex, activates spermatozoa motility. The sequence is that of Apolipoprotein A-I (APOA1) from Odobenus rosmarus divergens (Pacific walrus).